Here is an 88-residue protein sequence, read N- to C-terminus: MERNTRKTLQGKVTSARGDKTIIVEVESHRSHALYSKRYRVAKKFAVHDENNIAKVNDIVTIMETRPLSKTKHFRLVAVKQAAMQGEK.

This sequence belongs to the universal ribosomal protein uS17 family. As to quaternary structure, part of the 30S ribosomal subunit.

One of the primary rRNA binding proteins, it binds specifically to the 5'-end of 16S ribosomal RNA. This chain is Small ribosomal subunit protein uS17, found in Mycoplasmopsis agalactiae (strain NCTC 10123 / CIP 59.7 / PG2) (Mycoplasma agalactiae).